The primary structure comprises 193 residues: Peptidyl-tRNA hydrolase (193 aa).

His-17 provides a ligand contact to tRNA. His-22 serves as the catalytic Proton acceptor. TRNA contacts are provided by Phe-68, Asn-70, and Asn-116.

This sequence belongs to the PTH family. Monomer.

The protein resides in the cytoplasm. It carries out the reaction an N-acyl-L-alpha-aminoacyl-tRNA + H2O = an N-acyl-L-amino acid + a tRNA + H(+). Functionally, hydrolyzes ribosome-free peptidyl-tRNAs (with 1 or more amino acids incorporated), which drop off the ribosome during protein synthesis, or as a result of ribosome stalling. Catalyzes the release of premature peptidyl moieties from peptidyl-tRNA molecules trapped in stalled 50S ribosomal subunits, and thus maintains levels of free tRNAs and 50S ribosomes. The chain is Peptidyl-tRNA hydrolase from Xanthomonas campestris pv. campestris (strain ATCC 33913 / DSM 3586 / NCPPB 528 / LMG 568 / P 25).